Here is a 209-residue protein sequence, read N- to C-terminus: Large ribosomal subunit protein uL3 (209 aa).

Residues 133-152 (THGNSLSHRVPGSIGQNQTP) form a disordered region. N5-methylglutamine is present on Gln-150.

This sequence belongs to the universal ribosomal protein uL3 family. Part of the 50S ribosomal subunit. Forms a cluster with proteins L14 and L19. Post-translationally, methylated by PrmB.

One of the primary rRNA binding proteins, it binds directly near the 3'-end of the 23S rRNA, where it nucleates assembly of the 50S subunit. This chain is Large ribosomal subunit protein uL3, found in Yersinia enterocolitica serotype O:8 / biotype 1B (strain NCTC 13174 / 8081).